Consider the following 319-residue polypeptide: Ferrochelatase (319 aa).

Residues H192 and E271 each contribute to the Fe cation site.

Belongs to the ferrochelatase family.

It is found in the cytoplasm. The enzyme catalyses heme b + 2 H(+) = protoporphyrin IX + Fe(2+). It participates in porphyrin-containing compound metabolism; protoheme biosynthesis; protoheme from protoporphyrin-IX: step 1/1. Functionally, catalyzes the ferrous insertion into protoporphyrin IX. The sequence is that of Ferrochelatase from Geotalea uraniireducens (strain Rf4) (Geobacter uraniireducens).